We begin with the raw amino-acid sequence, 138 residues long: MAEKLKVELVTPYKKVLSEEVDEITATGALGEFGVLPGHAPFLTSLKIGELAYRKDGVSHHMALNWGYFEVENDTVTVLVETAEKADEIDLERAKAALGRAETELKGLTPEDKNFRIYEAALERALIRVQVAGKAARR.

Belongs to the ATPase epsilon chain family. As to quaternary structure, F-type ATPases have 2 components, CF(1) - the catalytic core - and CF(0) - the membrane proton channel. CF(1) has five subunits: alpha(3), beta(3), gamma(1), delta(1), epsilon(1). CF(0) has three main subunits: a, b and c.

It is found in the cell inner membrane. In terms of biological role, produces ATP from ADP in the presence of a proton gradient across the membrane. This is ATP synthase epsilon chain from Citrifermentans bemidjiense (strain ATCC BAA-1014 / DSM 16622 / JCM 12645 / Bem) (Geobacter bemidjiensis).